Here is a 231-residue protein sequence, read N- to C-terminus: MAKISKRVQALRAKVDRNRIYPVAEALALVKECATAKFDESIDVAVNLGVDARKSDQVVRGSVVLPAGTGKTVRVAVFAQGDKAEAARAAGADVVGFDDLAEQVKGGTIDFDLCIATPDAMRVVGQLGQILGPRGLMPNPKVGTVTMDVTTAVKNAKAGQVQYRTDKGGLVHATIGRASFGVEALQQNLNAFIEALVKARPAAAKGVYLRRVAVSSTMGAGVRVEPTTASA.

This sequence belongs to the universal ribosomal protein uL1 family. In terms of assembly, part of the 50S ribosomal subunit.

In terms of biological role, binds directly to 23S rRNA. The L1 stalk is quite mobile in the ribosome, and is involved in E site tRNA release. Protein L1 is also a translational repressor protein, it controls the translation of the L11 operon by binding to its mRNA. In Azoarcus sp. (strain BH72), this protein is Large ribosomal subunit protein uL1.